Reading from the N-terminus, the 290-residue chain is uncharacterized protein (290 aa).

This is an uncharacterized protein from Ictalurid herpesvirus 1 (strain Auburn) (IcHV-1).